A 534-amino-acid polypeptide reads, in one-letter code: Arginine--tRNA ligase (534 aa).

The 'HIGH' region motif lies at 120-130 (ANPTGFLHLGH).

Belongs to the class-I aminoacyl-tRNA synthetase family. As to quaternary structure, monomer.

It is found in the cytoplasm. It carries out the reaction tRNA(Arg) + L-arginine + ATP = L-arginyl-tRNA(Arg) + AMP + diphosphate. The protein is Arginine--tRNA ligase of Mesomycoplasma hyopneumoniae (strain 232) (Mycoplasma hyopneumoniae).